The chain runs to 205 residues: Ferritin heavy chain (205 aa).

The N-terminal stretch at 1–19 (MVKLIASLLLLAVVAQAYG) is a signal peptide. Residues 35-190 (VDMKDACIKG…GKLTTLKKMM (156 aa)) enclose the Ferritin-like diiron domain. Residues Cys-41 and Cys-150 are joined by a disulfide bond. Glu-52, Glu-87, His-90, Glu-136, and Gln-172 together coordinate Fe cation.

The protein belongs to the ferritin family. In terms of assembly, oligomer of 12 light (L) chains and 12 heavy (H) chains; L and H chains are disulfide-linked. The functional molecule forms a roughly spherical shell with a diameter of 12 nm and contains a central cavity into which the insoluble ferric iron core is deposited. Expressed in hemolymph and gut (at protein level). Expressed in the head (at protein level). Expressed in thorax and abdomen.

It localises to the golgi apparatus. The protein localises to the secreted. It catalyses the reaction 4 Fe(2+) + O2 + 4 H(+) = 4 Fe(3+) + 2 H2O. In terms of biological role, stores iron in a soluble, non-toxic, readily available form. Important for iron homeostasis. Iron is taken up in the ferrous form and deposited as ferric hydroxides after oxidation. Ferritin is composed of a heavy (H) chain which is responsible for the oxidation and uptake of ferrous iron, and a light (L) chain which facilitates the nucleation of the ferrihydrite iron core. Required for dietary iron absorption in the midgut. Involved in tissue iron detoxification by exporting excess iron. Functions as an antioxidant and protects the developing organs from cell-mediated ferroptosis. Required for embryo and larval development. Plays a role in blood cell (haemocyte) differentiation in the lymph gland at the larval stage. May also store Zn(2+) and Mn(2+) and thus may play a role in zinc and manganese homeostasis. The protein is Ferritin heavy chain of Drosophila melanogaster (Fruit fly).